A 142-amino-acid chain; its full sequence is Large ribosomal subunit protein uL11 (142 aa).

It belongs to the universal ribosomal protein uL11 family. As to quaternary structure, part of the ribosomal stalk of the 50S ribosomal subunit. Interacts with L10 and the large rRNA to form the base of the stalk. L10 forms an elongated spine to which L12 dimers bind in a sequential fashion forming a multimeric L10(L12)X complex. One or more lysine residues are methylated.

Its function is as follows. Forms part of the ribosomal stalk which helps the ribosome interact with GTP-bound translation factors. In Mesorhizobium japonicum (strain LMG 29417 / CECT 9101 / MAFF 303099) (Mesorhizobium loti (strain MAFF 303099)), this protein is Large ribosomal subunit protein uL11.